The primary structure comprises 293 residues: RNA pseudouridylate synthase domain-containing protein 1 (293 aa).

Aspartate 67 is a catalytic residue.

Belongs to the pseudouridine synthase RluA family.

The protein is RNA pseudouridylate synthase domain-containing protein 1 (rpusd1) of Danio rerio (Zebrafish).